Consider the following 325-residue polypeptide: Phosphate acyltransferase (325 aa).

This sequence belongs to the PlsX family. As to quaternary structure, homodimer. Probably interacts with PlsY.

Its subcellular location is the cytoplasm. It carries out the reaction a fatty acyl-[ACP] + phosphate = an acyl phosphate + holo-[ACP]. It participates in lipid metabolism; phospholipid metabolism. Catalyzes the reversible formation of acyl-phosphate (acyl-PO(4)) from acyl-[acyl-carrier-protein] (acyl-ACP). This enzyme utilizes acyl-ACP as fatty acyl donor, but not acyl-CoA. The polypeptide is Phosphate acyltransferase (Staphylococcus epidermidis (strain ATCC 35984 / DSM 28319 / BCRC 17069 / CCUG 31568 / BM 3577 / RP62A)).